The chain runs to 218 residues: Cytidylate kinase (218 aa).

7-15 is an ATP binding site; that stretch reads GPSASGKSS.

It belongs to the cytidylate kinase family. Type 1 subfamily.

It is found in the cytoplasm. The catalysed reaction is CMP + ATP = CDP + ADP. It catalyses the reaction dCMP + ATP = dCDP + ADP. This is Cytidylate kinase from Borrelia hermsii (strain HS1 / DAH).